The sequence spans 496 residues: Lysine--tRNA ligase (496 aa).

Mg(2+)-binding residues include Glu408 and Glu415.

It belongs to the class-II aminoacyl-tRNA synthetase family. Homodimer. Mg(2+) serves as cofactor.

It localises to the cytoplasm. It catalyses the reaction tRNA(Lys) + L-lysine + ATP = L-lysyl-tRNA(Lys) + AMP + diphosphate. This chain is Lysine--tRNA ligase, found in Legionella pneumophila (strain Lens).